Here is a 156-residue protein sequence, read N- to C-terminus: Arginine repressor (156 aa).

This sequence belongs to the ArgR family.

Its subcellular location is the cytoplasm. It functions in the pathway amino-acid biosynthesis; L-arginine biosynthesis [regulation]. Regulates arginine biosynthesis genes. In Shewanella putrefaciens (strain CN-32 / ATCC BAA-453), this protein is Arginine repressor.